The following is a 624-amino-acid chain: Phosphatidylserine decarboxylase proenzyme 2 (624 aa).

The disordered stretch occupies residues 1–30 (MGHSPSRHNACGGGGGDGESPPSPLPSRFE). The region spanning 16-129 (GDGESPPSPL…KDLDEHSEVL (114 aa)) is the C2 domain. 2 EF-hand domains span residues 156 to 191 (TEQS…FGNK) and 192 to 227 (LAVA…QQEK). Ca(2+) contacts are provided by Asp169, Asn171, Asp173, Glu175, Glu180, Asp205, Asn207, Asp209, and Glu216. Residues Asp425, His481, and Ser569 each act as charge relay system; for autoendoproteolytic cleavage activity in the active site. The active-site Schiff-base intermediate with substrate; via pyruvic acid; for decarboxylase activity is the Ser569. Ser569 is subject to Pyruvic acid (Ser); by autocatalysis.

This sequence belongs to the phosphatidylserine decarboxylase family. PSD-B subfamily. Eukaryotic type II sub-subfamily. In terms of assembly, heterodimer of a large membrane-associated beta subunit and a small pyruvoyl-containing alpha subunit. It depends on pyruvate as a cofactor. Post-translationally, is synthesized initially as an inactive proenzyme. Formation of the active enzyme involves a self-maturation process in which the active site pyruvoyl group is generated from an internal serine residue via an autocatalytic post-translational modification. Two non-identical subunits are generated from the proenzyme in this reaction, and the pyruvate is formed at the N-terminus of the alpha chain, which is derived from the carboxyl end of the proenzyme. The autoendoproteolytic cleavage occurs by a canonical serine protease mechanism, in which the side chain hydroxyl group of the serine supplies its oxygen atom to form the C-terminus of the beta chain, while the remainder of the serine residue undergoes an oxidative deamination to produce ammonia and the pyruvoyl prosthetic group on the alpha chain. During this reaction, the Ser that is part of the protease active site of the proenzyme becomes the pyruvoyl prosthetic group, which constitutes an essential element of the active site of the mature decarboxylase.

The protein localises to the vacuole membrane. It is found in the endoplasmic reticulum membrane. It catalyses the reaction a 1,2-diacyl-sn-glycero-3-phospho-L-serine + H(+) = a 1,2-diacyl-sn-glycero-3-phosphoethanolamine + CO2. Its pathway is phospholipid metabolism; phosphatidylethanolamine biosynthesis; phosphatidylethanolamine from CDP-diacylglycerol: step 2/2. In terms of biological role, catalyzes the formation of phosphatidylethanolamine (PtdEtn) from phosphatidylserine (PtdSer). Plays a central role in phospholipid metabolism and in the interorganelle trafficking of phosphatidylserine. This chain is Phosphatidylserine decarboxylase proenzyme 2, found in Oryza sativa subsp. japonica (Rice).